We begin with the raw amino-acid sequence, 693 residues long: Polyribonucleotide nucleotidyltransferase (693 aa).

Asp-489 and Asp-495 together coordinate Mg(2+). The region spanning 556–615 (PQIHVMNINPAKIKDVVGRGGATVKGIVEKTGAQIDTSDSGEVKVFAKDKKSMDMAVAMI) is the KH domain. One can recognise an S1 motif domain in the interval 625-693 (GQVYKGKIVK…GRVKLSLVAR (69 aa)).

The protein belongs to the polyribonucleotide nucleotidyltransferase family. In terms of assembly, component of the RNA degradosome, which is a multiprotein complex involved in RNA processing and mRNA degradation. Mg(2+) is required as a cofactor.

The protein resides in the cytoplasm. The catalysed reaction is RNA(n+1) + phosphate = RNA(n) + a ribonucleoside 5'-diphosphate. Its function is as follows. Involved in mRNA degradation. Catalyzes the phosphorolysis of single-stranded polyribonucleotides processively in the 3'- to 5'-direction. This is Polyribonucleotide nucleotidyltransferase from Francisella tularensis subsp. holarctica (strain OSU18).